A 442-amino-acid polypeptide reads, in one-letter code: Syndecan-3 (442 aa).

Disordered stretches follow at residues 1–25 (MKPGPPRRGTAQGQRVDTATHAPGA) and 47–80 (RWRNENFERPVDLEGSGDDDSFPDDELDDLYSGS). A signal peptide spans 1–44 (MKPGPPRRGTAQGQRVDTATHAPGARGLLLPPLLLLLLAGRAAG). Topologically, residues 45-387 (AQRWRNENFE…SILERKEVLV (343 aa)) are extracellular. Over residues 48-58 (WRNENFERPVD) the composition is skewed to basic and acidic residues. Residues 61-75 (GSGDDDSFPDDELDD) are compositionally biased toward acidic residues. O-linked (Xyl...) (glycosaminoglycan) serine glycans are attached at residues Ser78, Ser80, Ser82, and Ser89. A glycan (O-linked (GalNAc) threonine; by GALNT13) is linked at Thr107. Disordered stretches follow at residues 152-199 (ESSQ…PATA), 253-293 (ATSR…AQTP), and 305-327 (EPEVPVSGGPSGDFELQEETTQP). Low complexity-rich tracts occupy residues 157 to 199 (ATTI…PATA) and 276 to 287 (TLPLGTTAPGPT). O-linked (GalNAc) serine; by GALNT13 glycosylation occurs at Ser161. O-linked (GalNAc) threonine; by GALNT13 glycans are attached at residues Thr162, Thr163, Thr170, and Thr172. Residues Ser315 and Ser367 are each glycosylated (O-linked (Xyl...) (glycosaminoglycan) serine). A helical membrane pass occupies residues 388–408 (AVIVGGVVGALFAAFLVTLLI). Phosphotyrosine occurs at positions 409, 419, 431, and 441. At 409-442 (YRMKKKDEGSYTLEEPKQASVTYQKPDKQEEFYA) the chain is on the cytoplasmic side. The interval 419–442 (YTLEEPKQASVTYQKPDKQEEFYA) is disordered. A compositionally biased stretch (basic and acidic residues) spans 433 to 442 (KPDKQEEFYA).

It belongs to the syndecan proteoglycan family. As to quaternary structure, interacts with TIAM1. Interacts with PTN (via heparan sulfate chains); this interaction mediates the neurite outgrowth-promoting signal from PTN to the cytoskeleton of growing neurites; this interaction mediates osteoblast recruitment. Interacts with MDK; this interaction induces SDC3 clustering; this interaction induces neuronal cell adhesion and neurite outgrowth. Post-translationally, O-glycosylated within the Thr/Ser-rich region which could interact with lectin domains on other molecules.

The protein localises to the cell membrane. Functionally, cell surface proteoglycan that may bear heparan sulfate. May have a role in the organization of cell shape by affecting the actin cytoskeleton, possibly by transferring signals from the cell surface in a sugar-dependent mechanism. This chain is Syndecan-3 (Sdc3), found in Mus musculus (Mouse).